A 385-amino-acid polypeptide reads, in one-letter code: Probable protein phosphatase 2C 79 (385 aa).

An N-terminal signal peptide occupies residues 1–18 (MLSLFFNFLTSCLWPSSS). One can recognise a PPM-type phosphatase domain in the interval 47 to 356 (DFSMAVVQAN…DDITVVVLFL (310 aa)). Serine 76 is subject to Phosphoserine. Mn(2+)-binding residues include aspartate 87, glycine 88, aspartate 288, and aspartate 347.

It belongs to the PP2C family. Mg(2+) is required as a cofactor. Requires Mn(2+) as cofactor.

The enzyme catalyses O-phospho-L-seryl-[protein] + H2O = L-seryl-[protein] + phosphate. It catalyses the reaction O-phospho-L-threonyl-[protein] + H2O = L-threonyl-[protein] + phosphate. May dephosphorylate and repress plasma membrane H(+)-ATPases (PM H(+)-ATPases, e.g. AHA1 and AHA2), thus influencing negatively plant growth and fitness. In Arabidopsis thaliana (Mouse-ear cress), this protein is Probable protein phosphatase 2C 79.